Consider the following 150-residue polypeptide: 3-hydroxyacyl-[acyl-carrier-protein] dehydratase FabZ (150 aa).

His-51 is a catalytic residue.

Belongs to the thioester dehydratase family. FabZ subfamily.

The protein localises to the cytoplasm. It catalyses the reaction a (3R)-hydroxyacyl-[ACP] = a (2E)-enoyl-[ACP] + H2O. Functionally, involved in unsaturated fatty acids biosynthesis. Catalyzes the dehydration of short chain beta-hydroxyacyl-ACPs and long chain saturated and unsaturated beta-hydroxyacyl-ACPs. The protein is 3-hydroxyacyl-[acyl-carrier-protein] dehydratase FabZ of Legionella pneumophila subsp. pneumophila (strain Philadelphia 1 / ATCC 33152 / DSM 7513).